The primary structure comprises 398 residues: Acetate kinase (398 aa).

Position 8 (Asn-8) interacts with Mg(2+). Lys-15 contacts ATP. Residue Arg-89 coordinates substrate. Catalysis depends on Asp-146, which acts as the Proton donor/acceptor. ATP contacts are provided by residues 206–210, 283–285, and 331–335; these read HIGNG, DMR, and GMGEN. Position 383 (Glu-383) interacts with Mg(2+).

It belongs to the acetokinase family. As to quaternary structure, homodimer. It depends on Mg(2+) as a cofactor. Mn(2+) is required as a cofactor.

The protein localises to the cytoplasm. The catalysed reaction is acetate + ATP = acetyl phosphate + ADP. It functions in the pathway metabolic intermediate biosynthesis; acetyl-CoA biosynthesis; acetyl-CoA from acetate: step 1/2. Catalyzes the formation of acetyl phosphate from acetate and ATP. Can also catalyze the reverse reaction. This Streptococcus pyogenes serotype M49 (strain NZ131) protein is Acetate kinase.